We begin with the raw amino-acid sequence, 85 residues long: Latartoxin-1a (85 aa).

The first 19 residues, 1–19 (MKVLVFAIVCSVLLQVVLS), serve as a signal peptide directing secretion. Residues 20-25 (ADEEAR) constitute a propeptide, removed in mature form. Positions 22 to 25 (EEAR) match the Processing quadruplet motif motif. Intrachain disulfides connect C27/C42, C34/C47, C41/C64, and C49/C62.

This sequence belongs to the neurotoxin 19 (CSTX) family. Contains 4 disulfide bonds. Post-translationally, cleavage of the propeptide depends on the processing quadruplet motif (XXXR, with at least one of X being E). As to expression, expressed by the venom gland.

The protein resides in the secreted. Functionally, insect toxin. Causes paralysis in larvae of C.vicina by depolarizing membranes at the neuromuscular junction. The sequence is that of Latartoxin-1a from Lachesana tarabaevi (Spider).